We begin with the raw amino-acid sequence, 121 residues long: Large ribosomal subunit protein bL12 (121 aa).

It belongs to the bacterial ribosomal protein bL12 family. In terms of assembly, homodimer. Part of the ribosomal stalk of the 50S ribosomal subunit. Forms a multimeric L10(L12)X complex, where L10 forms an elongated spine to which 2 to 4 L12 dimers bind in a sequential fashion. Binds GTP-bound translation factors.

In terms of biological role, forms part of the ribosomal stalk which helps the ribosome interact with GTP-bound translation factors. Is thus essential for accurate translation. In Pectobacterium carotovorum subsp. carotovorum (strain PC1), this protein is Large ribosomal subunit protein bL12.